Reading from the N-terminus, the 412-residue chain is Transcription factor IIIA (412 aa).

Residues 1–20 (MSESDETKSISSLISSSSSS) form a disordered region. Low complexity predominate over residues 9 to 20 (SISSLISSSSSS). 7 C2H2-type zinc fingers span residues 25–49 (YICT…LRTH), 55–79 (YKCT…IVSH), 85–107 (FHCS…EITH), 111–136 (FKCT…LSVH), 140–162 (LTCK…KLKH), 169–194 (YQCD…KQSH), and 197–219 (LKCP…MLSH). The segment at 228-252 (WTCDYCDVGKFAKKNELVEHYNIFH) adopts a C2H2-type 8; degenerate zinc-finger fold. The disordered stretch occupies residues 285–316 (LETEKLKVEEDEEDEEDSLDEKRSDVRSDSMS). A compositionally biased stretch (acidic residues) spans 293–303 (EEDEEDEEDSL). The C2H2-type 9 zinc-finger motif lies at 345–369 (INCPKNNCDRMFSREYDLRRHLKWH).

The protein localises to the nucleus. Transcription factor required for transcription of 5S rRNA by RNA polymerase III. This chain is Transcription factor IIIA (PZF1), found in Candida albicans (strain SC5314 / ATCC MYA-2876) (Yeast).